The chain runs to 272 residues: 3-methyl-2-oxobutanoate hydroxymethyltransferase (272 aa).

Asp-51 and Asp-90 together coordinate Mg(2+). 3-methyl-2-oxobutanoate is bound by residues 51 to 52, Asp-90, and Lys-118; that span reads DS. Residue Glu-120 coordinates Mg(2+). The Proton acceptor role is filled by Glu-187.

Belongs to the PanB family. Homodecamer; pentamer of dimers. Requires Mg(2+) as cofactor.

The protein resides in the cytoplasm. The catalysed reaction is 3-methyl-2-oxobutanoate + (6R)-5,10-methylene-5,6,7,8-tetrahydrofolate + H2O = 2-dehydropantoate + (6S)-5,6,7,8-tetrahydrofolate. The protein operates within cofactor biosynthesis; (R)-pantothenate biosynthesis; (R)-pantoate from 3-methyl-2-oxobutanoate: step 1/2. Its function is as follows. Catalyzes the reversible reaction in which hydroxymethyl group from 5,10-methylenetetrahydrofolate is transferred onto alpha-ketoisovalerate to form ketopantoate. This is 3-methyl-2-oxobutanoate hydroxymethyltransferase from Xylella fastidiosa (strain 9a5c).